A 216-amino-acid chain; its full sequence is Large ribosomal subunit protein bL21 (216 aa).

It belongs to the bacterial ribosomal protein bL21 family. As to quaternary structure, part of the 50S ribosomal subunit. Contacts protein L20.

Functionally, this protein binds to 23S rRNA in the presence of protein L20. The polypeptide is Large ribosomal subunit protein bL21 (Roseobacter denitrificans (strain ATCC 33942 / OCh 114) (Erythrobacter sp. (strain OCh 114))).